We begin with the raw amino-acid sequence, 477 residues long: Bifunctional protein HldE (477 aa).

The ribokinase stretch occupies residues 1-318; that stretch reads MKVTLPEFER…ENAVRGRADT (318 aa). Lys-179 carries the post-translational modification N6-acetyllysine. Residue 195–198 participates in ATP binding; that stretch reads NLSE. The active site involves Asp-264. Residues 344 to 477 form a cytidylyltransferase region; sequence MTNGVFDILH…IKKIQQDKKG (134 aa).

This sequence in the N-terminal section; belongs to the carbohydrate kinase PfkB family. It in the C-terminal section; belongs to the cytidylyltransferase family. Homodimer.

It carries out the reaction D-glycero-beta-D-manno-heptose 7-phosphate + ATP = D-glycero-beta-D-manno-heptose 1,7-bisphosphate + ADP + H(+). The enzyme catalyses D-glycero-beta-D-manno-heptose 1-phosphate + ATP + H(+) = ADP-D-glycero-beta-D-manno-heptose + diphosphate. The protein operates within nucleotide-sugar biosynthesis; ADP-L-glycero-beta-D-manno-heptose biosynthesis; ADP-L-glycero-beta-D-manno-heptose from D-glycero-beta-D-manno-heptose 7-phosphate: step 1/4. It functions in the pathway nucleotide-sugar biosynthesis; ADP-L-glycero-beta-D-manno-heptose biosynthesis; ADP-L-glycero-beta-D-manno-heptose from D-glycero-beta-D-manno-heptose 7-phosphate: step 3/4. Catalyzes the phosphorylation of D-glycero-D-manno-heptose 7-phosphate at the C-1 position to selectively form D-glycero-beta-D-manno-heptose-1,7-bisphosphate. In terms of biological role, catalyzes the ADP transfer from ATP to D-glycero-beta-D-manno-heptose 1-phosphate, yielding ADP-D-glycero-beta-D-manno-heptose. The chain is Bifunctional protein HldE from Escherichia coli O17:K52:H18 (strain UMN026 / ExPEC).